The following is a 254-amino-acid chain: 3-deoxy-manno-octulosonate cytidylyltransferase (254 aa).

Belongs to the KdsB family.

It is found in the cytoplasm. It catalyses the reaction 3-deoxy-alpha-D-manno-oct-2-ulosonate + CTP = CMP-3-deoxy-beta-D-manno-octulosonate + diphosphate. It functions in the pathway nucleotide-sugar biosynthesis; CMP-3-deoxy-D-manno-octulosonate biosynthesis; CMP-3-deoxy-D-manno-octulosonate from 3-deoxy-D-manno-octulosonate and CTP: step 1/1. It participates in bacterial outer membrane biogenesis; lipopolysaccharide biosynthesis. In terms of biological role, activates KDO (a required 8-carbon sugar) for incorporation into bacterial lipopolysaccharide in Gram-negative bacteria. The polypeptide is 3-deoxy-manno-octulosonate cytidylyltransferase (Haemophilus influenzae (strain PittGG)).